A 61-amino-acid chain; its full sequence is Cobrotoxin-c (61 aa).

Cystine bridges form between Cys3–Cys23, Cys17–Cys40, Cys42–Cys53, and Cys54–Cys59.

It belongs to the three-finger toxin family. Short-chain subfamily. Type I alpha-neurotoxin sub-subfamily. As to expression, expressed by the venom gland.

The protein resides in the secreted. Produces peripheral paralysis by blocking neuromuscular transmission at the postsynaptic site. Binds to the nicotinic acetylcholine receptor. This Naja kaouthia (Monocled cobra) protein is Cobrotoxin-c.